Reading from the N-terminus, the 90-residue chain is Small ribosomal subunit protein uS19 (90 aa).

The protein belongs to the universal ribosomal protein uS19 family.

In terms of biological role, protein S19 forms a complex with S13 that binds strongly to the 16S ribosomal RNA. The chain is Small ribosomal subunit protein uS19 from Mesomycoplasma hyopneumoniae (strain 232) (Mycoplasma hyopneumoniae).